The following is a 227-amino-acid chain: Cytochrome c oxidase subunit 2 (227 aa).

The Mitochondrial intermembrane portion of the chain corresponds to 1–14; the sequence is MAYPFELGFQDATS. A helical transmembrane segment spans residues 15–45; it reads PIMEELLHFHDHTLMIVFLISSLVLYIISLM. Residues 46-59 lie on the Mitochondrial matrix side of the membrane; sequence LTTKLTHTSTMDAQ. Residues 60–87 form a helical membrane-spanning segment; the sequence is EVETIWTILPAIILILIALPSLRVLYMM. Residues 88 to 227 lie on the Mitochondrial intermembrane side of the membrane; sequence DEINDPSLTV…HFENWSSSML (140 aa). Cu cation is bound by residues His-161, Cys-196, Glu-198, Cys-200, His-204, and Met-207. Residue Glu-198 participates in Mg(2+) binding.

It belongs to the cytochrome c oxidase subunit 2 family. In terms of assembly, component of the cytochrome c oxidase (complex IV, CIV), a multisubunit enzyme composed of 14 subunits. The complex is composed of a catalytic core of 3 subunits MT-CO1, MT-CO2 and MT-CO3, encoded in the mitochondrial DNA, and 11 supernumerary subunits COX4I, COX5A, COX5B, COX6A, COX6B, COX6C, COX7A, COX7B, COX7C, COX8 and NDUFA4, which are encoded in the nuclear genome. The complex exists as a monomer or a dimer and forms supercomplexes (SCs) in the inner mitochondrial membrane with NADH-ubiquinone oxidoreductase (complex I, CI) and ubiquinol-cytochrome c oxidoreductase (cytochrome b-c1 complex, complex III, CIII), resulting in different assemblies (supercomplex SCI(1)III(2)IV(1) and megacomplex MCI(2)III(2)IV(2)). Found in a complex with TMEM177, COA6, COX18, COX20, SCO1 and SCO2. Interacts with TMEM177 in a COX20-dependent manner. Interacts with COX20. Interacts with COX16. The cofactor is Cu cation.

The protein resides in the mitochondrion inner membrane. It catalyses the reaction 4 Fe(II)-[cytochrome c] + O2 + 8 H(+)(in) = 4 Fe(III)-[cytochrome c] + 2 H2O + 4 H(+)(out). In terms of biological role, component of the cytochrome c oxidase, the last enzyme in the mitochondrial electron transport chain which drives oxidative phosphorylation. The respiratory chain contains 3 multisubunit complexes succinate dehydrogenase (complex II, CII), ubiquinol-cytochrome c oxidoreductase (cytochrome b-c1 complex, complex III, CIII) and cytochrome c oxidase (complex IV, CIV), that cooperate to transfer electrons derived from NADH and succinate to molecular oxygen, creating an electrochemical gradient over the inner membrane that drives transmembrane transport and the ATP synthase. Cytochrome c oxidase is the component of the respiratory chain that catalyzes the reduction of oxygen to water. Electrons originating from reduced cytochrome c in the intermembrane space (IMS) are transferred via the dinuclear copper A center (CU(A)) of subunit 2 and heme A of subunit 1 to the active site in subunit 1, a binuclear center (BNC) formed by heme A3 and copper B (CU(B)). The BNC reduces molecular oxygen to 2 water molecules using 4 electrons from cytochrome c in the IMS and 4 protons from the mitochondrial matrix. This Sciurus carolinensis (Eastern gray squirrel) protein is Cytochrome c oxidase subunit 2 (MT-CO2).